The sequence spans 543 residues: Membrane protein insertase YidC (543 aa).

Residues 7-27 traverse the membrane as a helical segment; it reads FLLIGLAMVSFLLWQQWQVDY. The tract at residues 30 to 61 is disordered; it reads QPAQPVESQQTTGSDAPNSNGDVPIATPTNKS. Positions 35–61 are enriched in polar residues; that stretch reads VESQQTTGSDAPNSNGDVPIATPTNKS. Transmembrane regions (helical) follow at residues 341–361, 421–441, 451–471, and 499–519; these read FAFL…IILI, GGCF…WVLL, FIFW…PILT, and PVAM…YWLI.

Belongs to the OXA1/ALB3/YidC family. Type 1 subfamily. In terms of assembly, interacts with the Sec translocase complex via SecD. Specifically interacts with transmembrane segments of nascent integral membrane proteins during membrane integration.

It is found in the cell inner membrane. Required for the insertion and/or proper folding and/or complex formation of integral membrane proteins into the membrane. Involved in integration of membrane proteins that insert both dependently and independently of the Sec translocase complex, as well as at least some lipoproteins. Aids folding of multispanning membrane proteins. The protein is Membrane protein insertase YidC of Pseudoalteromonas atlantica (strain T6c / ATCC BAA-1087).